The primary structure comprises 318 residues: Pantothenate synthetase (318 aa).

44–51 (MGALHQGH) serves as a coordination point for ATP. Catalysis depends on H51, which acts as the Proton donor. Residue Q75 coordinates (R)-pantoate. Residue Q75 participates in beta-alanine binding. Residue 161–164 (GEKD) coordinates ATP. Q167 provides a ligand contact to (R)-pantoate. Residues V190 and 198–201 (LSSR) each bind ATP. Residues 295–318 (DGHPNLDSQPEPAGTDPALLPPAR) form a disordered region.

Belongs to the pantothenate synthetase family. In terms of assembly, homodimer.

It is found in the cytoplasm. It catalyses the reaction (R)-pantoate + beta-alanine + ATP = (R)-pantothenate + AMP + diphosphate + H(+). It participates in cofactor biosynthesis; (R)-pantothenate biosynthesis; (R)-pantothenate from (R)-pantoate and beta-alanine: step 1/1. Its function is as follows. Catalyzes the condensation of pantoate with beta-alanine in an ATP-dependent reaction via a pantoyl-adenylate intermediate. This chain is Pantothenate synthetase, found in Nocardia farcinica (strain IFM 10152).